A 427-amino-acid polypeptide reads, in one-letter code: Adenylosuccinate synthetase (427 aa).

GTP is bound by residues 12 to 18 (GDEGKGK) and 40 to 42 (GHT). D13 serves as the catalytic Proton acceptor. Positions 13 and 40 each coordinate Mg(2+). Residues 13-16 (DEGK), 38-41 (NAGH), T128, R142, Q223, T238, and R302 contribute to the IMP site. Residue H41 is the Proton donor of the active site. 298 to 304 (VTTGRAR) is a binding site for substrate. GTP contacts are provided by residues R304, 330–332 (KLD), and 412–414 (GVG).

It belongs to the adenylosuccinate synthetase family. In terms of assembly, homodimer. The cofactor is Mg(2+).

The protein resides in the cytoplasm. The enzyme catalyses IMP + L-aspartate + GTP = N(6)-(1,2-dicarboxyethyl)-AMP + GDP + phosphate + 2 H(+). It participates in purine metabolism; AMP biosynthesis via de novo pathway; AMP from IMP: step 1/2. Functionally, plays an important role in the de novo pathway of purine nucleotide biosynthesis. Catalyzes the first committed step in the biosynthesis of AMP from IMP. This is Adenylosuccinate synthetase from Parafrankia sp. (strain EAN1pec).